A 334-amino-acid polypeptide reads, in one-letter code: tRNA-cytidine(32) 2-sulfurtransferase (334 aa).

Residues 74–79 carry the PP-loop motif motif; the sequence is SGGKDS. Residues C149, C152, and C240 each contribute to the [4Fe-4S] cluster site.

It belongs to the TtcA family. In terms of assembly, homodimer. It depends on Mg(2+) as a cofactor. The cofactor is [4Fe-4S] cluster.

It localises to the cytoplasm. The catalysed reaction is cytidine(32) in tRNA + S-sulfanyl-L-cysteinyl-[cysteine desulfurase] + AH2 + ATP = 2-thiocytidine(32) in tRNA + L-cysteinyl-[cysteine desulfurase] + A + AMP + diphosphate + H(+). The protein operates within tRNA modification. Its function is as follows. Catalyzes the ATP-dependent 2-thiolation of cytidine in position 32 of tRNA, to form 2-thiocytidine (s(2)C32). The sulfur atoms are provided by the cysteine/cysteine desulfurase (IscS) system. In Burkholderia ambifaria (strain ATCC BAA-244 / DSM 16087 / CCUG 44356 / LMG 19182 / AMMD) (Burkholderia cepacia (strain AMMD)), this protein is tRNA-cytidine(32) 2-sulfurtransferase.